A 453-amino-acid polypeptide reads, in one-letter code: Luminescence regulatory protein LuxO (453 aa).

The 112-residue stretch at 1 to 112 (MVEDTASVAA…RLRVTVNNAI (112 aa)) folds into the Response regulatory domain. Aspartate 47 carries the post-translational modification 4-aspartylphosphate. The Sigma-54 factor interaction domain occupies 133-362 (FIGSSQTMQQ…LQNVLRNIVV (230 aa)). Residues 161-168 (GESGTGKE) and 224-233 (ADGGTLFLDE) each bind ATP.

Acts negatively to control the expression of luminescence. At low cell density, LuxO is phosphorylated, and together with sigma-54, causes repression of the luxCDABEGH operon. This repression could be indirect, LuxO could activate a negative regulator of luminescence. At high cell density, LuxO is dephosphorylated and inactive, therefore the luxCDABEGH operon is not repressed and light is emitted. LuxO and sigma-54 have also a role in activating the production of siderophore and in regulating the rugose colony morphology phenotype. The polypeptide is Luminescence regulatory protein LuxO (luxO) (Vibrio campbellii (strain ATCC BAA-1116)).